The sequence spans 92 residues: Putative membrane protein insertion efficiency factor (92 aa).

Belongs to the UPF0161 family.

Its subcellular location is the cell membrane. Could be involved in insertion of integral membrane proteins into the membrane. In Tropheryma whipplei (strain TW08/27) (Whipple's bacillus), this protein is Putative membrane protein insertion efficiency factor.